Reading from the N-terminus, the 257-residue chain is Aspartate/glutamate leucyltransferase (257 aa).

It belongs to the R-transferase family. Bpt subfamily.

The protein localises to the cytoplasm. The enzyme catalyses N-terminal L-glutamyl-[protein] + L-leucyl-tRNA(Leu) = N-terminal L-leucyl-L-glutamyl-[protein] + tRNA(Leu) + H(+). It carries out the reaction N-terminal L-aspartyl-[protein] + L-leucyl-tRNA(Leu) = N-terminal L-leucyl-L-aspartyl-[protein] + tRNA(Leu) + H(+). Its function is as follows. Functions in the N-end rule pathway of protein degradation where it conjugates Leu from its aminoacyl-tRNA to the N-termini of proteins containing an N-terminal aspartate or glutamate. The chain is Aspartate/glutamate leucyltransferase from Nitrobacter hamburgensis (strain DSM 10229 / NCIMB 13809 / X14).